The sequence spans 223 residues: Fibroblast growth factor-binding protein 2 (223 aa).

Positions 1-19 (MKFVPCLLLVTLSCLGTLG) are cleaved as a signal peptide. Residues 23-45 (RQKQGSTGEEFHFQTGGRDSCTM) form a disordered region. Disulfide bonds link cysteine 43–cysteine 63, cysteine 72–cysteine 106, and cysteine 81–cysteine 117. The segment at 120-201 (AGPQAHMQQV…PGGNEEAKKK (82 aa)) is disordered. Over residues 125–144 (HMQQVTSSLKGSPEPNQQPE) the composition is skewed to polar residues. The segment covering 175 to 186 (AKPTTRPTAKPT) has biased composition (low complexity). Residues cysteine 206 and cysteine 214 are joined by a disulfide bond.

Belongs to the fibroblast growth factor-binding protein family. In terms of tissue distribution, expressed in serum, peripheral leukocytes and cytotoxic T-lymphocytes, but not in granulocytes and monocytes (at protein level).

The protein resides in the secreted. Its subcellular location is the extracellular space. This Homo sapiens (Human) protein is Fibroblast growth factor-binding protein 2 (FGFBP2).